Reading from the N-terminus, the 49-residue chain is Large ribosomal subunit protein bL33 (49 aa).

Belongs to the bacterial ribosomal protein bL33 family.

This chain is Large ribosomal subunit protein bL33, found in Clostridium perfringens (strain ATCC 13124 / DSM 756 / JCM 1290 / NCIMB 6125 / NCTC 8237 / Type A).